The primary structure comprises 872 residues: Alanine--tRNA ligase (872 aa).

Zn(2+) contacts are provided by histidine 566, histidine 570, cysteine 668, and histidine 672.

The protein belongs to the class-II aminoacyl-tRNA synthetase family. Zn(2+) is required as a cofactor.

The protein localises to the cytoplasm. It carries out the reaction tRNA(Ala) + L-alanine + ATP = L-alanyl-tRNA(Ala) + AMP + diphosphate. In terms of biological role, catalyzes the attachment of alanine to tRNA(Ala) in a two-step reaction: alanine is first activated by ATP to form Ala-AMP and then transferred to the acceptor end of tRNA(Ala). Also edits incorrectly charged Ser-tRNA(Ala) and Gly-tRNA(Ala) via its editing domain. The chain is Alanine--tRNA ligase from Lactococcus lactis subsp. lactis (strain IL1403) (Streptococcus lactis).